The primary structure comprises 200 residues: Peptidyl-tRNA hydrolase (200 aa).

Tyrosine 15 provides a ligand contact to tRNA. Histidine 20 acts as the Proton acceptor in catalysis. TRNA-binding residues include phenylalanine 66, asparagine 68, and asparagine 114.

It belongs to the PTH family. Monomer.

The protein localises to the cytoplasm. The catalysed reaction is an N-acyl-L-alpha-aminoacyl-tRNA + H2O = an N-acyl-L-amino acid + a tRNA + H(+). In terms of biological role, hydrolyzes ribosome-free peptidyl-tRNAs (with 1 or more amino acids incorporated), which drop off the ribosome during protein synthesis, or as a result of ribosome stalling. Functionally, catalyzes the release of premature peptidyl moieties from peptidyl-tRNA molecules trapped in stalled 50S ribosomal subunits, and thus maintains levels of free tRNAs and 50S ribosomes. This Ralstonia nicotianae (strain ATCC BAA-1114 / GMI1000) (Ralstonia solanacearum) protein is Peptidyl-tRNA hydrolase.